The chain runs to 523 residues: Mitochondrial distribution and morphology protein 12 (523 aa).

The SMP-LTD domain maps to 1–483 (MSFDINWEKL…WPSWICVDMA (483 aa)). Residues 108-117 (HEADIINDHD) are compositionally biased toward basic and acidic residues. Disordered regions lie at residues 108–160 (HEAD…QYDE), 178–213 (SAST…PFQS), 270–313 (KTKE…NAKN), and 483–523 (AEND…KKED). Composition is skewed to acidic residues over residues 118–140 (YGDE…DDEN) and 148–158 (EDEENEESSQY). 2 stretches are compositionally biased toward polar residues: residues 178–187 (SASTPKRTSP) and 277–288 (SGDQQQGKQTGK). The segment covering 289-313 (ANEKGQKHKHEHEEEQGSDKQNAKN) has biased composition (basic and acidic residues). A compositionally biased stretch (acidic residues) spans 483-501 (AENDDEEEDDDDDDHDEDN). Basic and acidic residues predominate over residues 502-523 (EGRGRMRDTGDVDVRDHDKKED).

This sequence belongs to the MDM12 family. In terms of assembly, component of the ER-mitochondria encounter structure (ERMES) or MDM complex, composed of MMM1, MDM10, MDM12 and MDM34. An MMM1 homodimer associates with one molecule of MDM12 on each side in a pairwise head-to-tail manner, and the SMP-LTD domains of MMM1 and MDM12 generate a continuous hydrophobic tunnel for phospholipid trafficking.

It is found in the mitochondrion outer membrane. It localises to the endoplasmic reticulum membrane. Component of the ERMES/MDM complex, which serves as a molecular tether to connect the endoplasmic reticulum (ER) and mitochondria. Components of this complex are involved in the control of mitochondrial shape and protein biogenesis, and function in nonvesicular lipid trafficking between the ER and mitochondria. MDM12 is required for the interaction of the ER-resident membrane protein MMM1 and the outer mitochondrial membrane-resident beta-barrel protein MDM10. The MDM12-MMM1 subcomplex functions in the major beta-barrel assembly pathway that is responsible for biogenesis of all mitochondrial outer membrane beta-barrel proteins, and acts in a late step after the SAM complex. The MDM10-MDM12-MMM1 subcomplex further acts in the TOM40-specific pathway after the action of the MDM12-MMM1 complex. Essential for establishing and maintaining the structure of mitochondria and maintenance of mtDNA nucleoids. In Lodderomyces elongisporus (strain ATCC 11503 / CBS 2605 / JCM 1781 / NBRC 1676 / NRRL YB-4239) (Yeast), this protein is Mitochondrial distribution and morphology protein 12.